A 236-amino-acid polypeptide reads, in one-letter code: Small ribosomal subunit protein uS2c (236 aa).

The protein belongs to the universal ribosomal protein uS2 family.

The protein resides in the plastid. It localises to the chloroplast. This chain is Small ribosomal subunit protein uS2c (rps2), found in Draba nemorosa (Woodland whitlowgrass).